The chain runs to 107 residues: U1-lycotoxin-Ls1b (107 aa).

An N-terminal signal peptide occupies residues 1–20 (MMKVLVVVALLVTLISYSSG). Residues 21-41 (EGIDDLEADELLSLMANEQTR) constitute a propeptide that is removed on maturation. Cystine bridges form between C44–C59, C51–C68, C58–C86, and C70–C84.

Belongs to the neurotoxin 19 (CSTX) family. 04 (U1-Lctx) subfamily. As to expression, expressed by the venom gland.

It localises to the secreted. The chain is U1-lycotoxin-Ls1b from Lycosa singoriensis (Wolf spider).